Here is a 412-residue protein sequence, read N- to C-terminus: F-box/WD repeat-containing protein 4 (412 aa).

Residues 25–71 (GPALWRLPEELLLLICSYLDMRALGRLAQVCRWLRRFTSCDLLWRRI) enclose the F-box domain. WD repeat units lie at residues 154 to 190 (RPLG…IHKI), 193 to 229 (TFTV…VWPL), 236 to 277 (QCLH…IWDL), 283 to 321 (MTHL…YWDL), 327 to 366 (KCVM…LWDR), and 373 to 409 (HAFP…VLDF).

As to quaternary structure, part of a SCF (SKP1-cullin-F-box) protein ligase complex. Interacts with POUF51. In terms of tissue distribution, expressed in brain, kidney, lung and liver.

Functionally, probably recognizes and binds to some phosphorylated proteins and promotes their ubiquitination and degradation. Likely to be involved in key signaling pathways crucial for normal limb development. May participate in Wnt signaling. This chain is F-box/WD repeat-containing protein 4 (FBXW4), found in Homo sapiens (Human).